Here is a 199-residue protein sequence, read N- to C-terminus: Adenylate kinase (199 aa).

10-15 (GAGKGT) serves as a coordination point for ATP. The tract at residues 30 to 59 (STGDMLRAAVAARTPVGLQAKSIMESGGLV) is NMP. AMP-binding positions include T31, R36, 57–59 (GLV), 85–88 (GFPR), and Q92. The tract at residues 126-142 (KRAAETLARGEAVRKDD) is LID. Position 127 (R127) interacts with ATP. The AMP site is built by R139 and R150. A178 provides a ligand contact to ATP.

Belongs to the adenylate kinase family. As to quaternary structure, monomer.

The protein localises to the cytoplasm. The catalysed reaction is AMP + ATP = 2 ADP. The protein operates within purine metabolism; AMP biosynthesis via salvage pathway; AMP from ADP: step 1/1. Its function is as follows. Catalyzes the reversible transfer of the terminal phosphate group between ATP and AMP. Plays an important role in cellular energy homeostasis and in adenine nucleotide metabolism. In Methylobacterium nodulans (strain LMG 21967 / CNCM I-2342 / ORS 2060), this protein is Adenylate kinase.